A 146-amino-acid polypeptide reads, in one-letter code: Protein archease (146 aa).

Ca(2+) contacts are provided by Asp16, Asp145, and Ile146.

It belongs to the archease family.

Functionally, activates the tRNA-splicing ligase complex by facilitating the enzymatic turnover of catalytic subunit RtcB. Acts by promoting the guanylylation of RtcB, a key intermediate step in tRNA ligation. Can also alter the NTP specificity of RtcB such that ATP, dGTP or ITP is used efficiently. This chain is Protein archease, found in Methanosarcina mazei (strain ATCC BAA-159 / DSM 3647 / Goe1 / Go1 / JCM 11833 / OCM 88) (Methanosarcina frisia).